The chain runs to 522 residues: Maturase K (522 aa).

Belongs to the intron maturase 2 family. MatK subfamily.

It localises to the plastid. The protein resides in the chloroplast. Its function is as follows. Usually encoded in the trnK tRNA gene intron. Probably assists in splicing its own and other chloroplast group II introns. This is Maturase K from Schizorhiza neglecta (Lapeirousia neglecta).